Consider the following 257-residue polypeptide: Large ribosomal subunit protein uL2 (257 aa).

Residues Lys42 and Lys149 each participate in a glycyl lysine isopeptide (Lys-Gly) (interchain with G-Cter in SUMO2) cross-link. Residues 207–232 form a disordered region; it reads VEHPFGGGNHQHIGKPSTIRRDAPAG. (3S)-3-hydroxyhistidine is present on His216. Residues Lys234 and Lys250 each participate in a glycyl lysine isopeptide (Lys-Gly) (interchain with G-Cter in SUMO2) cross-link.

The protein belongs to the universal ribosomal protein uL2 family. Component of the large ribosomal subunit. Interacts with CRY1. Post-translationally, hydroxylated on His-216 by RIOX1. The modification is impaired by hypoxia.

Its subcellular location is the cytoplasm. In terms of biological role, component of the large ribosomal subunit. The ribosome is a large ribonucleoprotein complex responsible for the synthesis of proteins in the cell. This chain is Large ribosomal subunit protein uL2 (RPL8), found in Bos taurus (Bovine).